We begin with the raw amino-acid sequence, 504 residues long: MLKTTTVAGLAAVLLTTGLPAEVAQSFAEAVRVQAPAVPSFANVVDAVSPAVVSVRVQARERVSDDESNFTFDFGGRGFEDLPEDHPLRRFFREFAPRENDRADRWRDRRGPRGEGRLRPRAQGSGFFITEDGYLVTNNHVVSDGSAFTVIMNDGTELDAKLVGKDSRTDLAVLKVDDKRKFTYVSFADDEKVRVGDWVVAVGNPFGLGGTVTAGIISARGRDIGSGPYDDYLQVDAAVNRGNSGGPTFNLSGEVVGINTAIFSPSGGNVGIAFAIPASVAKDVVDSLIKDGTVSRGWLGVQIQPVTKDIAESLGLSEANGALVVEPQAGSPGEKAGIKNGDVVTALNGEPVKDPRDLARRVAALRPGSTAEVTLWRSGKSETVNLEIGTLPSDAKEPAPATGEAQPDEGQAGEEALADLGLTVTPSEDGKGVTIASVDPDSDAGDRGLKEGEKIVSVNNQEVKSADDVLKVINNAKKDGRSKALFQIEAQEGSRFVALPITQG.

A signal peptide spans 1–26 (MLKTTTVAGLAAVLLTTGLPAEVAQS). Positions 102–118 (RADRWRDRRGPRGEGRL) are enriched in basic and acidic residues. The tract at residues 102-122 (RADRWRDRRGPRGEGRLRPRA) is disordered. Positions 113–286 (RGEGRLRPRA…PASVAKDVVD (174 aa)) are serine protease. Active-site charge relay system residues include His140, Asp170, and Ser244. Substrate contacts are provided by residues 242-244 (GNS) and 299-303 (LGVQI). 2 consecutive PDZ domains span residues 287 to 378 (SLIK…LWRS) and 401 to 491 (ATGE…IEAQ). Disordered regions lie at residues 389-411 (GTLP…DEGQ) and 428-447 (EDGK…AGDR).

It belongs to the peptidase S1C family.

The protein localises to the periplasm. It catalyses the reaction Acts on substrates that are at least partially unfolded. The cleavage site P1 residue is normally between a pair of hydrophobic residues, such as Val-|-Val.. Functionally, might be efficient in the degradation of transiently denatured and unfolded proteins which accumulate in the periplasm following stress conditions. This Rhizobium meliloti (strain 1021) (Ensifer meliloti) protein is Probable periplasmic serine endoprotease DegP-like (degP1).